The primary structure comprises 716 residues: Protein Hook homolog 2 (716 aa).

The required for localization to the centrosome and induction of aggresome formation stretch occupies residues 1–161 (MSVDKAELCG…ELMTKDTPDS (161 aa)). A sufficient for interaction with microtubules region spans residues 1–546 (MSVDKAELCG…LKRKLEDHLQ (546 aa)). In terms of domain architecture, Calponin-homology (CH) spans 6–122 (AELCGSLLTW…KLLQLVLGCA (117 aa)). Serine 163 bears the Phosphoserine mark. Coiled-coil stretches lie at residues 188 to 427 (DHLQ…AQLQ) and 455 to 605 (AELR…VDKA). The segment at 533 to 716 (DPTLLKRKLE…ALSLRPTDKH (184 aa)) is required for localization to the centrosome and induction of aggresome formation. The tract at residues 582–716 (DSLQKKDADL…ALSLRPTDKH (135 aa)) is sufficient for interaction with CNTRL.

This sequence belongs to the hook family. In terms of assembly, self-associates. Component of the FTS/Hook/FHIP complex (FHF complex), composed of AKTIP/FTS, FHIP1B, and one or more members of the Hook family of proteins HOOK1, HOOK2, and HOOK3. May interact directly with AKTIP/FTS, HOOK1 and HOOK3. Associates with several subunits of the homotypic vesicular sorting complex (the HOPS complex) including VPS16 and VPS41; these interactions may be indirect. Interacts with CNTRL. Interacts with microtubules. Interacts with ZC3H14. Interacts with LRGUK (via guanylate kinase-like domain). Interacts with CCDC181. Interacts with AP4M1; the interaction is direct, mediates the interaction between FTS-Hook-FHIP (FHF) complex and AP-4 and the perinuclear distribution of AP-4. In terms of tissue distribution, expressed in brain, cerebellum, kidney, liver and heart, with highest levels in heart and kidney (at protein level).

Its subcellular location is the cytoplasm. The protein resides in the cytoskeleton. The protein localises to the microtubule organizing center. It is found in the centrosome. It localises to the golgi apparatus. Its subcellular location is the trans-Golgi network. Component of the FTS/Hook/FHIP complex (FHF complex). The FHF complex may function to promote vesicle trafficking and/or fusion via the homotypic vesicular protein sorting complex (the HOPS complex). Contributes to the establishment and maintenance of centrosome function. May function in the positioning or formation of aggresomes, which are pericentriolar accumulations of misfolded proteins, proteasomes and chaperones. FHF complex promotes the distribution of AP-4 complex to the perinuclear area of the cell. This is Protein Hook homolog 2 (Hook2) from Mus musculus (Mouse).